The primary structure comprises 424 residues: C4-dicarboxylate transport protein (424 aa).

A run of 8 helical transmembrane segments spans residues 4 to 24 (SLFK…VLLG), 44 to 64 (LIKM…IAGM), 76 to 96 (VALI…LVVV), 142 to 162 (IGAF…LFGF), 184 to 206 (VFFG…AMAF), 222 to 242 (LIVC…GLIA), 326 to 346 (IWHQ…AAGV), and 352 to 372 (IVLA…LALI).

This sequence belongs to the dicarboxylate/amino acid:cation symporter (DAACS) (TC 2.A.23) family.

It localises to the cell inner membrane. In terms of biological role, responsible for the transport of dicarboxylates such as succinate, fumarate, and malate from the periplasm across the membrane. In Erwinia tasmaniensis (strain DSM 17950 / CFBP 7177 / CIP 109463 / NCPPB 4357 / Et1/99), this protein is C4-dicarboxylate transport protein.